Here is a 305-residue protein sequence, read N- to C-terminus: UDP-3-O-acyl-N-acetylglucosamine deacetylase (305 aa).

Residues H79, H238, and D242 each coordinate Zn(2+). H265 acts as the Proton donor in catalysis.

The protein belongs to the LpxC family. The cofactor is Zn(2+).

The enzyme catalyses a UDP-3-O-[(3R)-3-hydroxyacyl]-N-acetyl-alpha-D-glucosamine + H2O = a UDP-3-O-[(3R)-3-hydroxyacyl]-alpha-D-glucosamine + acetate. It participates in glycolipid biosynthesis; lipid IV(A) biosynthesis; lipid IV(A) from (3R)-3-hydroxytetradecanoyl-[acyl-carrier-protein] and UDP-N-acetyl-alpha-D-glucosamine: step 2/6. Functionally, catalyzes the hydrolysis of UDP-3-O-myristoyl-N-acetylglucosamine to form UDP-3-O-myristoylglucosamine and acetate, the committed step in lipid A biosynthesis. The protein is UDP-3-O-acyl-N-acetylglucosamine deacetylase of Shewanella woodyi (strain ATCC 51908 / MS32).